A 2123-amino-acid polypeptide reads, in one-letter code: MESGELLPSSPASSTTPTSSSAPSVASAVSKSSLSTGAASLSSTASPCVLEAGKSKIKVSPDSVSGAEWWRTTDGHSRAGTPFFPPLLGIPPLFAPPAQNHDSSFHSRTSGKSSRNGPEKGINGSVNGTSAASVLGVNASVVATPASSSMGQNQSTSSGGGTLKCHQEQNKSQPVDARADRIKDKKPRKKAMESSSNSDSDSGTSSDTSSEGISSSDSDDLEEEEEEDQSVEESEDDDSDSETEAQHKSNNQVLLHGISDPKTDGQKATEKAQERRTHQPLPPVSESQTHPPFQSQQKQPQVLSQQLPFIFQSSQAKEESVTKHTSVIQSTGLVSNVKPLSLVNQAKKETYRKLVVPSPDVLKAGNKNTSEESSSLTSELRSKREQYKQTFPSQGKKQEMGKSLKKVIAALSNTKATSSSPAHPKLPLDNNHPNPFLTNALLGNHQPNGVIQSVIQEAPLALTTKTKMQSKINENVSSSTPFSSPVNLSTSGRRAPGSQTPALPSASPILHSSGKEKRVSNDATPLKAHHHPHPAAAAAALVEQFRGTDSDVPSSKDSEDSNEDEEEDDEEEDEEDDEDDESDDSQSESDSNSQSDSEGSEDDEEKDQEESDSDTEGEKPAVNLTQTSSSAKSPPSSLTAHSAPHLHIGSPPGSAPAALCSESQPPAFLGTSSSTLTSTPHSGTSKRRRVADDQELRIPLDYGWQRETRVRNFGGRLPGEVAYYAPCGKKLRQCPDMVKGMQWCLLKEEDVIPRIRAMDGRRGRPPNPDRPRAREESRMKRRKGRPPNVGSAEFLDNTDAKLLRKLQAQEIARQAAQIKLLRKLQKQEQARVAKEAKKQQAIMAAEEKRKQKEQMKIIKQQEKIKRIQQIRMEKELRAQQILEAKKKKKEEAANAKLLEAEKRTKEKELRRQQAVLLKHQERERRRQHVMLMKAMEARKKAEEKERLKQEKRDEKRLNKERKLEQRRLELEMAKELKKPKEDMCLADQKPLPEWPRIPGLVLSGTTFSDCLMVVQFLRNFGKVLGFDVNIDVPNLSVLQEGLLNIGDSMGEVQDLLVRLLSAAVCDPGLITGYKAKTALGEHLLNVGVNRDNVSEVLQIFMEAHCGQTELTESLKTKAFQAHTPAQKASILAFLVNELACSKSVVSEIDKNIEYMSNLRRDKWMVEGKLRKLRIIHAKKTGKRDASGGIDLGEEQHPLGTPTPGRKRRRKGGDSDYDDDDDDDSDDQADEDEEDEEDKDDKKGKKTDICEDEDEGDQTASVEELEKQIEKLSKQQSQYRRKLFDASHSLRSMMFGQDRYRRRYWILPQCGGIFVEGMESGEGLEEIAKEKEKLKKAESLQIKEEVFETSAETLNCSIRDHCEQKDDPKEKDNTNLFLQKPGSFSKLSKLLEVAKMPPESDVMTPPKVNVSTNGGPLSHQNSGKHPLGSVPSATTAQSPVGKTDASLFSSGSGSCGKFYSPLPNDQLLKTLTEKNRQWFSLLPKTPCDDTSLTHADLSTTLVTPQSQPPSKSPSPAPAALLGPSSVQSPPGLNPFALSPLQVKGGVSMMGLQFCGWPAGVLASNVPFTSPLPALGSGLGLPEGNGSSSFLTSSVASSKSDSPVPPAERPSSAQPVAVEVAKPVDFPSPKPIPEEMQFGWWRIIDPEDLKTLLKVLHLRGIREKALQKQIQKHLDYITQACVRNKDVAIIELNENEDNQVTRDLVENWSVEEQAMELDLSILQQVEDLERRVASASLQVKGWMCPEPASEREDLVYFEHKSLTKLFKEHDGELTGDEENSAHALARKSDNPLDIAVTRLADLERNIERRYLKSPLSTTIQIKLDNVGTVTVPAPAPSISGDGDGIEEDIAPGLRVWRRALAEARSAAQVALCIQQLQRSIAWEKSIMKVYCQICRKGDNEELLLLCDGCDKGCHTYCHRPKITTIPDGDWFCPACISKASGQSIKIKKIHVKGKKTNDSKKTKKGNVAGDTEDEDSASTSSSLKRGSKELKKRKMEETTSLNLSKAESTTSIKKPKKDESRDLALCSMILTEMETHEDSWPFLLPVNLKLVPGYKKVIKKPMDFSTIREKLNNGQYPNFETFALDVRLVFDNCETFNEDDSDIGRAGHSMRKYFEKKWTDTFKVS.

Disordered regions lie at residues 1-129 (MESG…VNGT), 144-306 (TPAS…LSQQ), 357-402 (PSPD…EMGK), 473-534 (NENV…HPHP), 546-691 (RGTD…RRVA), 756-793 (RAMD…GSAE), and 937-960 (ARKK…LNKE). A compositionally biased stretch (low complexity) spans 7-46 (LPSSPASSTTPTSSSAPSVASAVSKSSLSTGAASLSSTAS). The segment covering 83–95 (FFPPLLGIPPLFA) has biased composition (pro residues). A compositionally biased stretch (polar residues) spans 100 to 116 (NHDSSFHSRTSGKSSRN). Composition is skewed to low complexity over residues 147–157 (SSSMGQNQSTS) and 193–216 (ESSS…ISSS). Positions 217–243 (DSDDLEEEEEEDQSVEESEDDDSDSET) are enriched in acidic residues. Positions 259–277 (SDPKTDGQKATEKAQERRT) are enriched in basic and acidic residues. Low complexity-rich tracts occupy residues 291–306 (PPFQ…LSQQ) and 366–379 (NKNT…LTSE). Residues 473 to 502 (NENVSSSTPFSSPVNLSTSGRRAPGSQTPA) are compositionally biased toward polar residues. Over residues 546–559 (RGTDSDVPSSKDSE) the composition is skewed to basic and acidic residues. Residues 560-587 (DSNEDEEEDDEEEDEEDDEDDESDDSQS) show a composition bias toward acidic residues. Positions 588–597 (ESDSNSQSDS) are enriched in low complexity. Over residues 598-615 (EGSEDDEEKDQEESDSDT) the composition is skewed to acidic residues. 2 stretches are compositionally biased toward low complexity: residues 628–637 (SSSAKSPPSS) and 671–683 (TSSS…PHSG). An MBD domain is found at 690-765 (VADDQELRIP…RAMDGRRGRP (76 aa)). Positions 756 to 778 (RAMDGRRGRPPNPDRPRAREESR) are enriched in basic and acidic residues. The 66-residue stretch at 1004–1069 (GTTFSDCLMV…LSAAVCDPGL (66 aa)) folds into the DDT domain. Disordered regions lie at residues 1183-1260 (RDAS…QTAS), 1396-1444 (PPES…KTDA), 1499-1526 (TLVT…SSVQ), and 1588-1614 (FLTS…AQPV). The segment covering 1214–1238 (SDYDDDDDDDSDDQADEDEEDEEDK) has biased composition (acidic residues). A compositionally biased stretch (basic and acidic residues) spans 1239 to 1248 (DDKKGKKTDI). Positions 1254–1281 (EGDQTASVEELEKQIEKLSKQQSQYRRK) form a coiled coil. Composition is skewed to polar residues over residues 1408–1422 (NVST…QNSG) and 1430–1444 (PSAT…KTDA). Over residues 1505–1515 (SQPPSKSPSPA) the composition is skewed to pro residues. Low complexity predominate over residues 1588 to 1600 (FLTSSVASSKSDS). The PHD-type zinc finger occupies 1886-1936 (KVYCQICRKGDNEELLLLCDGCDKGCHTYCHRPKITTIPDGDWFCPACISK). Residues 1949–2013 (VKGKKTNDSK…AESTTSIKKP (65 aa)) are disordered. A compositionally biased stretch (basic and acidic residues) spans 1984 to 1995 (GSKELKKRKMEE). Residues 1996–2010 (TTSLNLSKAESTTSI) show a composition bias toward polar residues. A Bromo domain is found at 2015–2119 (KDESRDLALC…KYFEKKWTDT (105 aa)).

The protein belongs to the WAL family. As to quaternary structure, component of the BRF-1 ISWI chromatin remodeling complex, at least composed of SMARCA1 and BAZ2B, which regulates the spacing of histone octamers on the DNA template to facilitate access to DNA. Within the BRF-1 ISWI chromatin remodeling complex interacts with SMARCA1; the interaction is direct. Component of the BRF-5 ISWI chromatin remodeling complex, at least composed of SMARCA5/SNF2H and BAZ2B, which regulates the spacing of histone octamers on the DNA template to facilitate access to DNA. Within the BRF-5 ISWI chromatin remodeling complex interacts with SMARCA5/SNF2H; the interaction is direct. Interacts with acetylated lysine residues on histone H1.4, H2A, H2B, H3 and H4 (in vitro). Interacts with EHMT1.

The protein localises to the nucleus. Its function is as follows. Regulatory subunit of the ATP-dependent BRF-1 and BRF-5 ISWI chromatin remodeling complexes, which form ordered nucleosome arrays on chromatin and facilitate access to DNA during DNA-templated processes such as DNA replication, transcription, and repair. Both complexes regulate the spacing of nucleosomes along the chromatin and have the ability to slide mononucleosomes to the center of a DNA template. The BRF-1 ISWI chromatin remodeling complex has a lower ATP hydrolysis rate than the BRF-5 ISWI chromatin remodeling complex. Chromatin reader protein, involved in positively modulating the rate of age-related behavioral deterioration. Represses the expression of mitochondrial function-related genes, perhaps by occupying their promoter regions, working in concert with histone methyltransferase EHMT1. This chain is Bromodomain adjacent to zinc finger domain protein 2B, found in Mus musculus (Mouse).